The chain runs to 187 residues: tRNA (mnm(5)s(2)U34)-methyltransferase (187 aa).

Residues asparagine 31, asparagine 33, aspartate 51, glutamine 53, histidine 77, and glutamate 78 each coordinate S-adenosyl-L-methionine.

It belongs to the methyltransferase superfamily. MnmM family. In terms of assembly, homodimer.

The enzyme catalyses 5-aminomethyl-2-thiouridine(34) in tRNA + S-adenosyl-L-methionine = 5-methylaminomethyl-2-thiouridine(34) in tRNA + S-adenosyl-L-homocysteine + H(+). Its pathway is tRNA modification. Involved in the biosynthesis of 5-methylaminomethyl-2-thiouridine (mnm(5)s(2)U) at the wobble position (U34) in tRNA. Catalyzes the transfer of a methyl group from S-adenosyl-L-methionine to nm(5)s(2)U34 to form mnm(5)s(2)U34. This is tRNA (mnm(5)s(2)U34)-methyltransferase from Staphylococcus aureus (strain NCTC 8325 / PS 47).